A 319-amino-acid polypeptide reads, in one-letter code: Acetyl-coenzyme A carboxylase carboxyl transferase subunit alpha (319 aa).

A CoA carboxyltransferase C-terminal domain is found at 35–296; the sequence is NIDEEVQRLR…KTQLLADLED (262 aa).

It belongs to the AccA family. In terms of assembly, acetyl-CoA carboxylase is a heterohexamer composed of biotin carboxyl carrier protein (AccB), biotin carboxylase (AccC) and two subunits each of ACCase subunit alpha (AccA) and ACCase subunit beta (AccD).

The protein resides in the cytoplasm. The enzyme catalyses N(6)-carboxybiotinyl-L-lysyl-[protein] + acetyl-CoA = N(6)-biotinyl-L-lysyl-[protein] + malonyl-CoA. It participates in lipid metabolism; malonyl-CoA biosynthesis; malonyl-CoA from acetyl-CoA: step 1/1. In terms of biological role, component of the acetyl coenzyme A carboxylase (ACC) complex. First, biotin carboxylase catalyzes the carboxylation of biotin on its carrier protein (BCCP) and then the CO(2) group is transferred by the carboxyltransferase to acetyl-CoA to form malonyl-CoA. This Edwardsiella ictaluri (strain 93-146) protein is Acetyl-coenzyme A carboxylase carboxyl transferase subunit alpha.